The chain runs to 537 residues: Ataxin-10 homolog (537 aa).

The protein belongs to the ataxin-10 family.

The protein localises to the cytoplasm. Functionally, may play a role in the regulation of cytokinesis. The sequence is that of Ataxin-10 homolog (CTR86) from Kluyveromyces lactis (strain ATCC 8585 / CBS 2359 / DSM 70799 / NBRC 1267 / NRRL Y-1140 / WM37) (Yeast).